The sequence spans 129 residues: MRAQRGLILLLLLLAVFCSTAVSLKCYNCLDPVSSCKINTTCSPNLDSCLYAVAGRQVYQQCWKLSDCNSNYIMSRLDVAGIQSKCCQWDLCNKNLDGLEEPNNAETSSLRKTALLGTSVLVAILKFCF.

The N-terminal stretch at Met-1–Ser-23 is a signal peptide. A UPAR/Ly6 domain is found at Leu-24–Thr-107. Disulfide bonds link Cys-26/Cys-49, Cys-29/Cys-36, Cys-42/Cys-62, Cys-68/Cys-86, and Cys-87/Cys-92. N-linked (GlcNAc...) asparagine glycosylation is present at Asn-39. Asn-104 is lipidated: GPI-anchor amidated asparagine. Residues Ala-105–Phe-129 constitute a propeptide, removed in mature form.

As to quaternary structure, interacts with T-cell surface antigen CD2. In terms of processing, N- and O-glycosylated. As to expression, widely expressed in the kidneys, brain, lungs, spleen and testis Testis-specific.

Its subcellular location is the cell membrane. The protein localises to the secreted. In terms of biological role, potent inhibitor of the complement membrane attack complex (MAC) action, which protects self-cells from damage during complement activation. Acts by binding to the beta-haipins of C8 (C8A and C8B) components of the assembling MAC, forming an intermolecular beta-sheet that prevents incorporation of the multiple copies of C9 required for complete formation of the osmolytic pore. This chain is CD59B glycoprotein, found in Mus musculus (Mouse).